Here is a 194-residue protein sequence, read N- to C-terminus: Molybdenum cofactor guanylyltransferase (194 aa).

Residues Leu-12 to Gly-14, Lys-25, Asn-53, Asp-70, and Asp-100 each bind GTP. Asp-100 contributes to the Mg(2+) binding site.

This sequence belongs to the MobA family. In terms of assembly, monomer. Requires Mg(2+) as cofactor.

Its subcellular location is the cytoplasm. The catalysed reaction is Mo-molybdopterin + GTP + H(+) = Mo-molybdopterin guanine dinucleotide + diphosphate. Transfers a GMP moiety from GTP to Mo-molybdopterin (Mo-MPT) cofactor (Moco or molybdenum cofactor) to form Mo-molybdopterin guanine dinucleotide (Mo-MGD) cofactor. This chain is Molybdenum cofactor guanylyltransferase, found in Vibrio atlanticus (strain LGP32) (Vibrio splendidus (strain Mel32)).